A 35-amino-acid polypeptide reads, in one-letter code: Cupiennin-2a (35 aa).

At K35 the chain carries Lysine amide.

In terms of tissue distribution, expressed by the venom gland.

It is found in the secreted. In Cupiennius salei (American wandering spider), this protein is Cupiennin-2a.